Here is a 245-residue protein sequence, read N- to C-terminus: Thiopurine S-methyltransferase (245 aa).

Position 29–40 (29–40 (WQEKWVSRRIGF)) interacts with S-adenosyl-L-methionine. Phe40 is a substrate binding site. An N6-acetyllysine modification is found at Lys58. S-adenosyl-L-methionine is bound by residues Leu69, Glu90, and Arg152.

The protein belongs to the class I-like SAM-binding methyltransferase superfamily. TPMT family. Monomer.

The protein localises to the cytoplasm. It carries out the reaction S-adenosyl-L-methionine + a thiopurine = S-adenosyl-L-homocysteine + a thiopurine S-methylether.. The polypeptide is Thiopurine S-methyltransferase (TPMT) (Lycaon pictus (African wild dog)).